We begin with the raw amino-acid sequence, 395 residues long: Formate-dependent phosphoribosylglycinamide formyltransferase (395 aa).

N(1)-(5-phospho-beta-D-ribosyl)glycinamide is bound by residues 22–23 and Glu-82; that span reads EL. ATP is bound by residues Arg-115, Lys-156, 161–166, 196–199, and Glu-204; these read SSGKGQ and EGFI. Residues 120–309 form the ATP-grasp domain; it reads RLAAETLGLP…EFALHARAIL (190 aa). Mg(2+) contacts are provided by Glu-268 and Glu-280. Residues Asp-287, Lys-356, and 363–364 each bind N(1)-(5-phospho-beta-D-ribosyl)glycinamide; that span reads RR.

The protein belongs to the PurK/PurT family. In terms of assembly, homodimer.

The catalysed reaction is N(1)-(5-phospho-beta-D-ribosyl)glycinamide + formate + ATP = N(2)-formyl-N(1)-(5-phospho-beta-D-ribosyl)glycinamide + ADP + phosphate + H(+). The protein operates within purine metabolism; IMP biosynthesis via de novo pathway; N(2)-formyl-N(1)-(5-phospho-D-ribosyl)glycinamide from N(1)-(5-phospho-D-ribosyl)glycinamide (formate route): step 1/1. In terms of biological role, involved in the de novo purine biosynthesis. Catalyzes the transfer of formate to 5-phospho-ribosyl-glycinamide (GAR), producing 5-phospho-ribosyl-N-formylglycinamide (FGAR). Formate is provided by PurU via hydrolysis of 10-formyl-tetrahydrofolate. The sequence is that of Formate-dependent phosphoribosylglycinamide formyltransferase from Stenotrophomonas maltophilia (strain K279a).